Consider the following 550-residue polypeptide: Glucose-6-phosphate isomerase (550 aa).

Glu356 (proton donor) is an active-site residue. Catalysis depends on residues His387 and Lys515.

This sequence belongs to the GPI family.

The protein localises to the cytoplasm. The enzyme catalyses alpha-D-glucose 6-phosphate = beta-D-fructose 6-phosphate. Its pathway is carbohydrate biosynthesis; gluconeogenesis. The protein operates within carbohydrate degradation; glycolysis; D-glyceraldehyde 3-phosphate and glycerone phosphate from D-glucose: step 2/4. Functionally, catalyzes the reversible isomerization of glucose-6-phosphate to fructose-6-phosphate. The chain is Glucose-6-phosphate isomerase from Vibrio parahaemolyticus serotype O3:K6 (strain RIMD 2210633).